The sequence spans 316 residues: Olfactory receptor 10A7 (316 aa).

Residues M1–V25 lie on the Extracellular side of the membrane. N5 carries an N-linked (GlcNAc...) asparagine glycan. A helical membrane pass occupies residues S26 to V46. The Cytoplasmic segment spans residues T47–A54. Residues L55 to L75 form a helical membrane-spanning segment. Residues V76–T99 are Extracellular-facing. The chain crosses the membrane as a helical span at residues Q100–Y120. At D121–S139 the chain is on the cytoplasmic side. Residues L140–T160 traverse the membrane as a helical segment. Topologically, residues A161–M197 are extracellular. The helical transmembrane segment at Q198–S217 threads the bilayer. Over Y218–A237 the chain is Cytoplasmic. A helical transmembrane segment spans residues F238–T258. The Extracellular segment spans residues Y259–K271. The chain crosses the membrane as a helical span at residues K272–L292. Residues R293 to F316 lie on the Cytoplasmic side of the membrane.

The protein belongs to the G-protein coupled receptor 1 family.

It is found in the cell membrane. Odorant receptor. This is Olfactory receptor 10A7 (OR10A7) from Homo sapiens (Human).